The chain runs to 98 residues: uncharacterized protein (98 aa).

This is an uncharacterized protein from Rickettsia prowazekii (strain Madrid E).